The chain runs to 345 residues: uncharacterized protein (345 aa).

It belongs to the proline racemase family.

This is an uncharacterized protein from Bacillus anthracis.